We begin with the raw amino-acid sequence, 263 residues long: Probable elongation factor 1-beta/1-delta 2 (263 aa).

At Ser-2 the chain carries N-acetylserine. Residues 112–153 are disordered; sequence QGQTSSVAAPAAAPAAAKEEAAGDDDFDLFGSEDEEEDEEKK. Over residues 133-150 the composition is skewed to acidic residues; it reads AGDDDFDLFGSEDEEEDE.

Belongs to the EF-1-beta/EF-1-delta family. EF-1 is composed of 4 subunits: alpha, beta, delta, and gamma.

Its function is as follows. EF-1-beta and EF-1-delta stimulate the exchange of GDP bound to EF-1-alpha to GTP. The polypeptide is Probable elongation factor 1-beta/1-delta 2 (Caenorhabditis elegans).